Here is a 515-residue protein sequence, read N- to C-terminus: 2-isopropylmalate synthase (515 aa).

The region spanning 5 to 267 (VIIFDTTLRD…DTRINTQEIH (263 aa)) is the Pyruvate carboxyltransferase domain. Asp-14, His-202, His-204, and Asn-238 together coordinate Mn(2+). The interval 392–515 (VLDKLSAHST…VADIKNHKHH (124 aa)) is regulatory domain.

This sequence belongs to the alpha-IPM synthase/homocitrate synthase family. LeuA type 1 subfamily. In terms of assembly, homodimer. It depends on Mn(2+) as a cofactor.

It is found in the cytoplasm. The enzyme catalyses 3-methyl-2-oxobutanoate + acetyl-CoA + H2O = (2S)-2-isopropylmalate + CoA + H(+). It participates in amino-acid biosynthesis; L-leucine biosynthesis; L-leucine from 3-methyl-2-oxobutanoate: step 1/4. In terms of biological role, catalyzes the condensation of the acetyl group of acetyl-CoA with 3-methyl-2-oxobutanoate (2-ketoisovalerate) to form 3-carboxy-3-hydroxy-4-methylpentanoate (2-isopropylmalate). The chain is 2-isopropylmalate synthase from Haemophilus influenzae (strain PittEE).